A 690-amino-acid polypeptide reads, in one-letter code: Ligand of Numb protein X 2 (690 aa).

The RING-type zinc finger occupies cysteine 50 to arginine 88. The disordered stretch occupies residues serine 198–leucine 224. The NPXY motif signature appears at asparagine 208 to phenylalanine 211. 4 PDZ domains span residues threonine 233 to arginine 318, glutamine 339 to glycine 422, histidine 468 to glutamate 554, and aspartate 600 to serine 688. A disordered region spans residues isoleucine 418–histidine 455.

As to quaternary structure, interacts with the phosphotyrosine interaction domain of NUMB.

In Homo sapiens (Human), this protein is Ligand of Numb protein X 2 (LNX2).